The chain runs to 400 residues: ATP-dependent RNA helicase fal-1 (400 aa).

Residues 26 to 54 (PTFESMSLKESLLRGIYAYGYESPSAVQS) carry the Q motif motif. Residues 57-227 (IVQICKGRDT…TKFMTDPVRI (171 aa)) enclose the Helicase ATP-binding domain. 70 to 77 (AQSGTGKT) is a binding site for ATP. The DEAD box motif lies at 175-178 (DEAD). In terms of domain architecture, Helicase C-terminal spans 238–399 (GLKQYFIAVE…EMPMNVADLI (162 aa)).

It belongs to the DEAD box helicase family. DDX48/FAL1 subfamily.

It is found in the nucleus. It localises to the nucleolus. It carries out the reaction ATP + H2O = ADP + phosphate + H(+). Functionally, ATP-dependent RNA helicase involved in 40S ribosomal subunit biogenesis. Required for the processing and cleavage of 35S pre-rRNA at sites A0, A1, and A2, leading to mature 18S rRNA. The polypeptide is ATP-dependent RNA helicase fal-1 (fal-1) (Neurospora crassa (strain ATCC 24698 / 74-OR23-1A / CBS 708.71 / DSM 1257 / FGSC 987)).